The chain runs to 362 residues: Aminomethyltransferase (362 aa).

The protein belongs to the GcvT family. As to quaternary structure, the glycine cleavage system is composed of four proteins: P, T, L and H.

It catalyses the reaction N(6)-[(R)-S(8)-aminomethyldihydrolipoyl]-L-lysyl-[protein] + (6S)-5,6,7,8-tetrahydrofolate = N(6)-[(R)-dihydrolipoyl]-L-lysyl-[protein] + (6R)-5,10-methylene-5,6,7,8-tetrahydrofolate + NH4(+). Functionally, the glycine cleavage system catalyzes the degradation of glycine. This chain is Aminomethyltransferase, found in Chlorobium limicola (strain DSM 245 / NBRC 103803 / 6330).